We begin with the raw amino-acid sequence, 181 residues long: Shikimate kinase 2 (181 aa).

Glycine 12–threonine 17 is an ATP binding site. The Mg(2+) site is built by threonine 16 and aspartate 32. The substrate site is built by aspartate 34, arginine 58, and glycine 79. An LID domain region spans residues glutamate 112–lysine 126. Arginine 120 serves as a coordination point for ATP. Arginine 139 lines the substrate pocket.

This sequence belongs to the shikimate kinase family. AroL subfamily. As to quaternary structure, monomer. Mg(2+) serves as cofactor.

It is found in the cytoplasm. It carries out the reaction shikimate + ATP = 3-phosphoshikimate + ADP + H(+). It functions in the pathway metabolic intermediate biosynthesis; chorismate biosynthesis; chorismate from D-erythrose 4-phosphate and phosphoenolpyruvate: step 5/7. In terms of biological role, catalyzes the specific phosphorylation of the 3-hydroxyl group of shikimic acid using ATP as a cosubstrate. This chain is Shikimate kinase 2, found in Salmonella heidelberg (strain SL476).